The chain runs to 402 residues: MPYAIDELQEIIGNLRTELVEPIDSGGVNNTRLGRDRVERMSAEVVDSNPYSRLMALQRMNIVKDYERIRDKAVAIVGVGGVGSVTADMLTRCGIGKLILFDYDKVELANMNRLFFTPNQAGLSKVAAAGATLNFINPDVEIEMFNFNITTVDNFDRFLNAISQGGRIAGQPVDLVLSCVDNFEARMAINAACNERNLNWFESGVSENAVSGHIQFIRPGDTACFACAPPLVVAENIDEKTLKKEGVCAASLPTTMGITAGFLVQNVLKYLLNFGEVSDYLGYNALSDFFPKMTLKPNPQCDDSNCLVRQMEFQAKPKPVVVEEKADNEEPLHATNEWGIELVAENAPEINPTSTETPVVGEGLKLAYEAPEKSSETSEETVTTAPPDDASLEDLMAQMKSM.

5 residues coordinate ATP: glycine 81, aspartate 102, lysine 125, asparagine 148, and asparagine 182. Zn(2+)-binding residues include cysteine 224 and cysteine 227. Cysteine 248 serves as the catalytic Glycyl thioester intermediate. Zn(2+)-binding residues include cysteine 301 and cysteine 306. Residues 369–402 form a disordered region; that stretch reads EAPEKSSETSEETVTTAPPDDASLEDLMAQMKSM.

Belongs to the ubiquitin-activating E1 family. UBA5 subfamily.

In terms of biological role, E1-like enzyme which activates UFM1. This Drosophila erecta (Fruit fly) protein is Ubiquitin-like modifier-activating enzyme 5.